Consider the following 360-residue polypeptide: Alanine racemase (360 aa).

K36 (proton acceptor; specific for D-alanine) is an active-site residue. The residue at position 36 (K36) is an N6-(pyridoxal phosphate)lysine. Residue R132 coordinates substrate. Residue Y256 is the Proton acceptor; specific for L-alanine of the active site. M304 is a binding site for substrate.

It belongs to the alanine racemase family. It depends on pyridoxal 5'-phosphate as a cofactor.

The enzyme catalyses L-alanine = D-alanine. Its pathway is amino-acid biosynthesis; D-alanine biosynthesis; D-alanine from L-alanine: step 1/1. In terms of biological role, catalyzes the interconversion of L-alanine and D-alanine. May also act on other amino acids. The sequence is that of Alanine racemase (alr) from Pasteurella multocida (strain Pm70).